We begin with the raw amino-acid sequence, 669 residues long: RNA-binding protein 14 (669 aa).

2 RRM domains span residues 1-73 (MKIF…MSRP) and 79-149 (WKIF…LSTK). Glycyl lysine isopeptide (Lys-Gly) (interchain with G-Cter in SUMO2) cross-links involve residues K126, K135, K138, K149, and K153. Disordered stretches follow at residues 147–175 (STKG…DTAF) and 193–232 (NSTG…PLTA). At S161 the chain carries Phosphoserine. K164 bears the N6-acetyllysine; alternate mark. K164 participates in a covalent cross-link: Glycyl lysine isopeptide (Lys-Gly) (interchain with G-Cter in SUMO2); alternate. T206 carries the post-translational modification Phosphothreonine. Phosphoserine is present on residues S220, S242, S244, S256, S272, and S280. The segment at 284-303 (PYRGQLASPSSQSAAASSLG) is disordered. Positions 287–303 (GQLASPSSQSAAASSLG) are enriched in low complexity. The interval 307 to 354 (GAQPSASALSSYGGQAAAASSLNSYGAQGSSLASYGNQPSSYGAQAAS) is TRBP-interacting domain; interaction with STIL. Phosphoserine occurs at positions 520, 523, 527, and 562. Positions 566–590 (VANANSTPPPYERTRLSPPRASYDD) are disordered. The residue at position 572 (T572) is a Phosphothreonine. Phosphoserine is present on S582. A Glycyl lysine isopeptide (Lys-Gly) (interchain with G-Cter in SUMO2) cross-link involves residue K600. S618, S620, S623, S627, S643, and S649 each carry phosphoserine.

In terms of assembly, isoform 1: Interacts with NCOA6, CITED1 and XRCC5/KU86. Isoform 1: Interacts with SS18 isoform 1. Isoform 1: Interacts with SS18 isoform 2. Interacts with STIL and interferes with its interaction with CPAP. Interacts with gamma-tubulin. Part of the HDP-RNP complex composed of at least HEXIM1, PRKDC, XRCC5, XRCC6, paraspeckle proteins (SFPQ, NONO, PSPC1, RBM14, and MATR3) and NEAT1 RNA. Interacts with RBPMS; the interaction allows cooperative assembly of RNA-bound stable cell-specific alternative splicing regulatory complexes. As to expression, expressed in all tissues tested, including brain, heart, skeletal muscle, colon, thymus, spleen, kidney, liver, small intestine, placenta, lung and peripheral blood lymphocytes.

The protein resides in the nucleus. It is found in the nucleolus. The protein localises to the cytoplasm. Functionally, isoform 1 may function as a nuclear receptor coactivator, enhancing transcription through other coactivators such as NCOA6 and CITED1. Isoform 2, functions as a transcriptional repressor, modulating transcriptional activities of coactivators including isoform 1, NCOA6 and CITED1. Regulates centriole biogenesis by suppressing the formation of aberrant centriolar protein complexes in the cytoplasm and thus preserving mitotic spindle integrity. Prevents the formation of the STIL-CPAP complex (which can induce the formation of aberrant centriolar protein complexes) by interfering with the interaction of STIL with CPAP. Plays a role in the regulation of DNA virus-mediated innate immune response by assembling into the HDP-RNP complex, a complex that serves as a platform for IRF3 phosphorylation and subsequent innate immune response activation through the cGAS-STING pathway. Also involved in the regulation of pre-mRNA alternative splicing. The sequence is that of RNA-binding protein 14 (RBM14) from Homo sapiens (Human).